Consider the following 140-residue polypeptide: Gas vesicle protein O (140 aa).

The segment covering 1–14 (MSDQGNEHANHDGI) has biased composition (basic and acidic residues). The segment at 1–61 (MSDQGNEHAN…DSTIGLSDAQ (61 aa)) is disordered. Residues 39 to 56 (QTASDEAVSNQSPDSTIG) are compositionally biased toward polar residues.

It belongs to the gas vesicle GvpO family. As to quaternary structure, forms homodimers, forms a GvpN-GvpO heterodimer, interacts with GvpC, GvpF, GvpI and GvpL, might interact with GvpA.

It is found in the gas vesicle. Its subcellular location is the cytoplasm. A minor component of the gas vesicle (GV), may play a role in transcription and/or RNA stability and/or in GV assembly. Gas vesicles are small, hollow, gas filled protein structures found in some microorganisms. They allow positioning of halobacteria at the optimal depth for growth in the poorly aerated shallow brine pools of their habitat. In terms of biological role, expression of a 9.5 kb mc-vac DNA fragment containing 2 divergently transcribed regions (gvpD-gvpE-gvpF-gvpG-gvpH-gvpI-gvpJ-gvpK-gvpL-gvpM and gvpA-gvpC-gvpN-gvpO) allows H.volcanii to produce gas vesicles. The polypeptide is Gas vesicle protein O (Haloferax mediterranei (strain ATCC 33500 / DSM 1411 / JCM 8866 / NBRC 14739 / NCIMB 2177 / R-4) (Halobacterium mediterranei)).